The following is a 235-amino-acid chain: Pyridoxine 5'-phosphate synthase (235 aa).

Asparagine 6 serves as a coordination point for 3-amino-2-oxopropyl phosphate. 8-9 (DH) serves as a coordination point for 1-deoxy-D-xylulose 5-phosphate. Residue arginine 17 coordinates 3-amino-2-oxopropyl phosphate. Residue histidine 42 is the Proton acceptor of the active site. Positions 44 and 49 each coordinate 1-deoxy-D-xylulose 5-phosphate. The active-site Proton acceptor is the glutamate 69. Threonine 99 lines the 1-deoxy-D-xylulose 5-phosphate pocket. Histidine 189 functions as the Proton donor in the catalytic mechanism. Residues glycine 190 and 211-212 (GH) contribute to the 3-amino-2-oxopropyl phosphate site.

It belongs to the PNP synthase family. In terms of assembly, homooctamer; tetramer of dimers.

The protein localises to the cytoplasm. The enzyme catalyses 3-amino-2-oxopropyl phosphate + 1-deoxy-D-xylulose 5-phosphate = pyridoxine 5'-phosphate + phosphate + 2 H2O + H(+). The protein operates within cofactor biosynthesis; pyridoxine 5'-phosphate biosynthesis; pyridoxine 5'-phosphate from D-erythrose 4-phosphate: step 5/5. Catalyzes the complicated ring closure reaction between the two acyclic compounds 1-deoxy-D-xylulose-5-phosphate (DXP) and 3-amino-2-oxopropyl phosphate (1-amino-acetone-3-phosphate or AAP) to form pyridoxine 5'-phosphate (PNP) and inorganic phosphate. In Chlorobium luteolum (strain DSM 273 / BCRC 81028 / 2530) (Pelodictyon luteolum), this protein is Pyridoxine 5'-phosphate synthase.